A 147-amino-acid polypeptide reads, in one-letter code: TRAP-T-associated universal stress protein TeaD (147 aa).

ATP is bound by residues Pro8–Asp10, Val38, Gly117–Asn122, and Ser131–Ala133.

The protein belongs to the universal stress protein A family. As to quaternary structure, homodimer or homotetramer; in equilibrium. The dimer/tetramer ratio is ATP-dependent. ATP stabilizes dimer-dimer complexes, with one ATP molecule bound to each monomer.

The protein localises to the cytoplasm. Functionally, ATP-binding protein that negatively regulates activity of the tripartite ATP-independent periplasmic (TRAP) ectoine transport system TeaABC. May regulate uptake according to the ATP status of the cell. The sequence is that of TRAP-T-associated universal stress protein TeaD (teaD) from Halomonas elongata (strain ATCC 33173 / DSM 2581 / NBRC 15536 / NCIMB 2198 / 1H9).